We begin with the raw amino-acid sequence, 166 residues long: NAD(P)H-quinone oxidoreductase subunit I, chloroplastic (166 aa).

4Fe-4S ferredoxin-type domains are found at residues 55–84 (GRIH…VDWK) and 95–124 (LNYS…MTEE). [4Fe-4S] cluster is bound by residues Cys-64, Cys-67, Cys-70, Cys-74, Cys-104, Cys-107, Cys-110, and Cys-114.

The protein belongs to the complex I 23 kDa subunit family. In terms of assembly, NDH is composed of at least 16 different subunits, 5 of which are encoded in the nucleus. [4Fe-4S] cluster serves as cofactor.

The protein localises to the plastid. It is found in the chloroplast thylakoid membrane. The catalysed reaction is a plastoquinone + NADH + (n+1) H(+)(in) = a plastoquinol + NAD(+) + n H(+)(out). It carries out the reaction a plastoquinone + NADPH + (n+1) H(+)(in) = a plastoquinol + NADP(+) + n H(+)(out). Its function is as follows. NDH shuttles electrons from NAD(P)H:plastoquinone, via FMN and iron-sulfur (Fe-S) centers, to quinones in the photosynthetic chain and possibly in a chloroplast respiratory chain. The immediate electron acceptor for the enzyme in this species is believed to be plastoquinone. Couples the redox reaction to proton translocation, and thus conserves the redox energy in a proton gradient. This is NAD(P)H-quinone oxidoreductase subunit I, chloroplastic from Chaetymenia peduncularis (Daisy).